The chain runs to 341 residues: Geranylgeranyl pyrophosphate synthase penG (341 aa).

Isopentenyl diphosphate-binding residues include Lys-68, Arg-71, and His-100. The Mg(2+) site is built by Asp-107 and Asp-111. Position 116 (Arg-116) interacts with dimethylallyl diphosphate. Arg-117 contributes to the isopentenyl diphosphate binding site. Residues Lys-194, Thr-195, and Gln-228 each coordinate dimethylallyl diphosphate. Residue Asp-231 coordinates Mg(2+). Dimethylallyl diphosphate contacts are provided by Asn-235, Lys-245, and Lys-255.

Belongs to the FPP/GGPP synthase family. It depends on Mg(2+) as a cofactor.

The enzyme catalyses isopentenyl diphosphate + dimethylallyl diphosphate = (2E)-geranyl diphosphate + diphosphate. It catalyses the reaction isopentenyl diphosphate + (2E)-geranyl diphosphate = (2E,6E)-farnesyl diphosphate + diphosphate. The catalysed reaction is isopentenyl diphosphate + (2E,6E)-farnesyl diphosphate = (2E,6E,10E)-geranylgeranyl diphosphate + diphosphate. The protein operates within secondary metabolite biosynthesis. Geranylgeranyl pyrophosphate synthase; part of the gene cluster that mediates the biosynthesis of the indole diterpenes penitrems. The geranylgeranyl diphosphate (GGPP) synthase penG catalyzes the first step in penitrem biosynthesis via conversion of farnesyl pyrophosphate and isopentyl pyrophosphate into geranylgeranyl pyrophosphate (GGPP). Condensation of indole-3-glycerol phosphate with GGPP by the prenyl transferase penC then forms 3-geranylgeranylindole (3-GGI). Epoxidation by the FAD-dependent monooxygenase penM leads to a epoxidized-GGI that is substrate of the terpene cyclase penB for cyclization to yield paspaline. Paspaline is subsequently converted to 13-desoxypaxilline by the cytochrome P450 monooxygenase penP, the latter being then converted to paxilline by the cytochrome P450 monooxygenase penQ. Paxilline is converted to beta-paxitriol via C-10 ketoreduction by the short-chain dehydrogenase PC-15 which can be monoprenylated at the C-20 by the indole diterpene prenyltransferase penD. A two-step elimination (acetylation and elimination) process performed by the O-acetyltransferase PC-16 and the P.simplicissimum ptmI-ortholog not yet identified in P.crustosum, leads to the production of the prenylated form of penijanthine. The FAD-linked oxidoreductase ptmO then converts the prenylated form of penijanthine into PC-M5 which is in turn transformed into PC-M4 by the aromatic dimethylallyltransferase PC-22. A series of oxidation steps involving 4 cytochrome P450 monooxygenases (PC-21, PC-05, PC-23, PC-20) and a FAD-dependent monooxygenase (PC-14) are required for the transformation of PC-M4 to penitrems A and E. Synthesis of these final products is proposed to proceed via penitrems D and C (PC-21, PC-05, PC-14) and penitrems B and F (PC-21, PC-05, PC-14, PC-23). The chain is Geranylgeranyl pyrophosphate synthase penG from Penicillium crustosum (Blue mold fungus).